A 210-amino-acid chain; its full sequence is Urease accessory protein UreF (210 aa).

This sequence belongs to the UreF family. As to quaternary structure, ureD, UreF and UreG form a complex that acts as a GTP-hydrolysis-dependent molecular chaperone, activating the urease apoprotein by helping to assemble the nickel containing metallocenter of UreC. The UreE protein probably delivers the nickel.

Its subcellular location is the cytoplasm. In terms of biological role, required for maturation of urease via the functional incorporation of the urease nickel metallocenter. This chain is Urease accessory protein UreF, found in Cereibacter sphaeroides (strain ATCC 17025 / ATH 2.4.3) (Rhodobacter sphaeroides).